The primary structure comprises 171 residues: Protein GrpE (171 aa).

A disordered region spans residues 1–20 (MNEEKEESPSTEAEGAGAEV).

Belongs to the GrpE family. Homodimer.

Its subcellular location is the cytoplasm. In terms of biological role, participates actively in the response to hyperosmotic and heat shock by preventing the aggregation of stress-denatured proteins, in association with DnaK and GrpE. It is the nucleotide exchange factor for DnaK and may function as a thermosensor. Unfolded proteins bind initially to DnaJ; upon interaction with the DnaJ-bound protein, DnaK hydrolyzes its bound ATP, resulting in the formation of a stable complex. GrpE releases ADP from DnaK; ATP binding to DnaK triggers the release of the substrate protein, thus completing the reaction cycle. Several rounds of ATP-dependent interactions between DnaJ, DnaK and GrpE are required for fully efficient folding. This chain is Protein GrpE, found in Acidithiobacillus ferrooxidans (strain ATCC 23270 / DSM 14882 / CIP 104768 / NCIMB 8455) (Ferrobacillus ferrooxidans (strain ATCC 23270)).